The sequence spans 77 residues: NADH-ubiquinone oxidoreductase chain 4L (77 aa).

A run of 2 helical transmembrane segments spans residues tryptophan 15 to serine 37 and methionine 44 to valine 64.

This sequence belongs to the complex I subunit 4L family.

The protein localises to the mitochondrion membrane. The enzyme catalyses a ubiquinone + NADH + 5 H(+)(in) = a ubiquinol + NAD(+) + 4 H(+)(out). Core subunit of the mitochondrial membrane respiratory chain NADH dehydrogenase (Complex I) that is believed to belong to the minimal assembly required for catalysis. Complex I functions in the transfer of electrons from NADH to the respiratory chain. The immediate electron acceptor for the enzyme is believed to be ubiquinone. The polypeptide is NADH-ubiquinone oxidoreductase chain 4L (Caenorhabditis elegans).